Consider the following 472-residue polypeptide: Glutamate--tRNA ligase 1 (472 aa).

Positions 9–19 (PSPTGLLHVGN) match the 'HIGH' region motif. Residues 112 to 131 (AMAEKRPPRYDGTWRDRDPS) show a composition bias toward basic and acidic residues. The segment at 112-133 (AMAEKRPPRYDGTWRDRDPSEA) is disordered. The 'KMSKS' region motif lies at 238 to 242 (KLSKR). K241 provides a ligand contact to ATP.

It belongs to the class-I aminoacyl-tRNA synthetase family. Glutamate--tRNA ligase type 1 subfamily. In terms of assembly, monomer.

It is found in the cytoplasm. The enzyme catalyses tRNA(Glu) + L-glutamate + ATP = L-glutamyl-tRNA(Glu) + AMP + diphosphate. In terms of biological role, catalyzes the attachment of glutamate to tRNA(Glu) in a two-step reaction: glutamate is first activated by ATP to form Glu-AMP and then transferred to the acceptor end of tRNA(Glu). This is Glutamate--tRNA ligase 1 from Gluconobacter oxydans (strain 621H) (Gluconobacter suboxydans).